A 119-amino-acid chain; its full sequence is Beta-2-microglobulin (119 aa).

The signal sequence occupies residues 1 to 20; that stretch reads MARFVVAALLVLLSLSGLEA. The 90-residue stretch at 25 to 114 folds into the Ig-like C1-type domain; it reads PKIQVYSRHP…MTFPAPKTVK (90 aa). Cysteine 45 and cysteine 100 form a disulfide bridge.

This sequence belongs to the beta-2-microglobulin family. As to quaternary structure, heterodimer of an alpha chain and a beta chain. Beta-2-microglobulin is the beta-chain of major histocompatibility complex class I molecules.

The protein resides in the secreted. Component of the class I major histocompatibility complex (MHC). Involved in the presentation of peptide antigens to the immune system. The protein is Beta-2-microglobulin (B2M) of Pithecia irrorata (Gray monk saki).